We begin with the raw amino-acid sequence, 442 residues long: tRNA modification GTPase MnmE (442 aa).

Arg-21, Glu-79, and Lys-118 together coordinate (6S)-5-formyl-5,6,7,8-tetrahydrofolate. In terms of domain architecture, TrmE-type G spans 214–367 (GFKIAIVGKP…LKEELQNYLN (154 aa)). Asn-224 lines the K(+) pocket. GTP contacts are provided by residues 224-229 (NVGKSS), 243-249 (SDIAGTT), and 268-271 (DTAG). Residue Ser-228 coordinates Mg(2+). Residues Ser-243, Ile-245, and Thr-248 each coordinate K(+). Residue Thr-249 participates in Mg(2+) binding. (6S)-5-formyl-5,6,7,8-tetrahydrofolate is bound at residue Lys-442.

Belongs to the TRAFAC class TrmE-Era-EngA-EngB-Septin-like GTPase superfamily. TrmE GTPase family. Homodimer. Heterotetramer of two MnmE and two MnmG subunits. It depends on K(+) as a cofactor.

The protein localises to the cytoplasm. In terms of biological role, exhibits a very high intrinsic GTPase hydrolysis rate. Involved in the addition of a carboxymethylaminomethyl (cmnm) group at the wobble position (U34) of certain tRNAs, forming tRNA-cmnm(5)s(2)U34. The chain is tRNA modification GTPase MnmE from Campylobacter jejuni subsp. jejuni serotype O:2 (strain ATCC 700819 / NCTC 11168).